Here is a 212-residue protein sequence, read N- to C-terminus: Protein-L-isoaspartate O-methyltransferase (212 aa).

Ser60 is an active-site residue.

It belongs to the methyltransferase superfamily. L-isoaspartyl/D-aspartyl protein methyltransferase family.

It is found in the cytoplasm. It carries out the reaction [protein]-L-isoaspartate + S-adenosyl-L-methionine = [protein]-L-isoaspartate alpha-methyl ester + S-adenosyl-L-homocysteine. Catalyzes the methyl esterification of L-isoaspartyl residues in peptides and proteins that result from spontaneous decomposition of normal L-aspartyl and L-asparaginyl residues. It plays a role in the repair and/or degradation of damaged proteins. The sequence is that of Protein-L-isoaspartate O-methyltransferase from Pseudomonas entomophila (strain L48).